The chain runs to 365 residues: Caffeic acid 3-O-methyltransferase 1 (365 aa).

Residue 130-136 coordinates substrate; sequence MNQDKVL. The substrate binding stretch occupies residues 162–180; sequence AFEYHGTDPRFNKVFNKGM. Residues G208, D231, D251, M252, and K265 each contribute to the S-adenosyl-L-methionine site. H269 acts as the Proton acceptor in catalysis.

Belongs to the class I-like SAM-binding methyltransferase superfamily. Cation-independent O-methyltransferase family. COMT subfamily. As to quaternary structure, homodimer. In terms of processing, the N-terminus is blocked. Xylem.

The catalysed reaction is (E)-caffeate + S-adenosyl-L-methionine = (E)-ferulate + S-adenosyl-L-homocysteine + H(+). Its pathway is aromatic compound metabolism; phenylpropanoid biosynthesis. Functionally, catalyzes the conversion of caffeic acid to ferulic acid and of 5-hydroxyferulic acid to sinapic acid. The resulting products may subsequently be converted to the corresponding alcohols that are incorporated into lignins. This Populus tremuloides (Quaking aspen) protein is Caffeic acid 3-O-methyltransferase 1 (OMT1).